The following is a 365-amino-acid chain: Donuts protein 1 (365 aa).

Residues 28 to 49 form a disordered region; it reads NSGLELPSQDYTNVEEKESSPK. Positions 82–125 constitute a CUE domain; the sequence is EKLCVLKELKIAFPEVDDTLIKAILIASQGVLEPAFNSLLYYSS. 2 disordered regions span residues 215–246 and 286–335; these read HNTILSNEDSILKGKEKGKEEEKEKGEEKGVN and ESEE…YKSA. Over residues 224–244 the composition is skewed to basic and acidic residues; the sequence is SILKGKEKGKEEEKEKGEEKG. Acidic residues predominate over residues 286 to 295; that stretch reads ESEEEEEQDV. Positions 315 to 331 are enriched in basic and acidic residues; it reads EAQRDSADRLPAKDDGG.

May interact directly with ADY3. Probable component of a spindle pole body (SPB) complex composed of ADY3, SSP1, DON1, MPC54, SPO21/MPC70, NUD1 and CNM67.

It is found in the prospore membrane. In terms of biological role, involved in the pathway that organizes the prospore membrane (PSM) during sporulation. This is Donuts protein 1 (DON1) from Saccharomyces cerevisiae (strain ATCC 204508 / S288c) (Baker's yeast).